Consider the following 153-residue polypeptide: SsrA-binding protein (153 aa).

The disordered stretch occupies residues 131–153 (EYDKRDSIRERDDRREMDRAFKR).

It belongs to the SmpB family.

It is found in the cytoplasm. Its function is as follows. Required for rescue of stalled ribosomes mediated by trans-translation. Binds to transfer-messenger RNA (tmRNA), required for stable association of tmRNA with ribosomes. tmRNA and SmpB together mimic tRNA shape, replacing the anticodon stem-loop with SmpB. tmRNA is encoded by the ssrA gene; the 2 termini fold to resemble tRNA(Ala) and it encodes a 'tag peptide', a short internal open reading frame. During trans-translation Ala-aminoacylated tmRNA acts like a tRNA, entering the A-site of stalled ribosomes, displacing the stalled mRNA. The ribosome then switches to translate the ORF on the tmRNA; the nascent peptide is terminated with the 'tag peptide' encoded by the tmRNA and targeted for degradation. The ribosome is freed to recommence translation, which seems to be the essential function of trans-translation. This is SsrA-binding protein from Parabacteroides distasonis (strain ATCC 8503 / DSM 20701 / CIP 104284 / JCM 5825 / NCTC 11152).